Reading from the N-terminus, the 205-residue chain is Small ribosomal subunit protein uS4 (205 aa).

The interval 18–49 is disordered; that stretch reads NIWGRPKSPVNKREYGPGQHGQRRKGKLSDFG. In terms of domain architecture, S4 RNA-binding spans 94–157; sequence RRLDTVVYRA…KQLALVLEAN (64 aa).

It belongs to the universal ribosomal protein uS4 family. As to quaternary structure, part of the 30S ribosomal subunit. Contacts protein S5. The interaction surface between S4 and S5 is involved in control of translational fidelity.

Its function is as follows. One of the primary rRNA binding proteins, it binds directly to 16S rRNA where it nucleates assembly of the body of the 30S subunit. Functionally, with S5 and S12 plays an important role in translational accuracy. This is Small ribosomal subunit protein uS4 from Nitrobacter winogradskyi (strain ATCC 25391 / DSM 10237 / CIP 104748 / NCIMB 11846 / Nb-255).